Consider the following 426-residue polypeptide: Anhydromevalonate phosphate decarboxylase (426 aa).

The Mn(2+) site is built by Asn148 and Glu211. Asp255 acts as the Proton acceptor in catalysis.

This sequence belongs to the UbiD family. The cofactor is prenylated FMN. Requires Mn(2+) as cofactor.

It catalyses the reaction (2E)-3-methyl-5-phosphooxypent-2-enoate + H(+) = isopentenyl phosphate + CO2. Its pathway is isoprenoid biosynthesis; isopentenyl diphosphate biosynthesis via mevalonate pathway. In terms of biological role, catalyzes the conversion of trans-anhydromevalonate 5-phosphate (tAHMP) into isopentenyl phosphate. Involved in the archaeal mevalonate (MVA) pathway, which provides fundamental precursors for isoprenoid biosynthesis, such as isopentenyl diphosphate (IPP) and dimethylallyl diphosphate (DMAPP). This is Anhydromevalonate phosphate decarboxylase from Archaeoglobus fulgidus (strain ATCC 49558 / DSM 4304 / JCM 9628 / NBRC 100126 / VC-16).